A 117-amino-acid polypeptide reads, in one-letter code: Large ribosomal subunit protein bL20 (117 aa).

The protein belongs to the bacterial ribosomal protein bL20 family.

Its function is as follows. Binds directly to 23S ribosomal RNA and is necessary for the in vitro assembly process of the 50S ribosomal subunit. It is not involved in the protein synthesizing functions of that subunit. This Rickettsia prowazekii (strain Madrid E) protein is Large ribosomal subunit protein bL20 (rplT).